The chain runs to 358 residues: Carbamoyl phosphate synthase small chain (358 aa).

Residues 1–172 (MKAALALEDG…EAKRFESDGD (172 aa)) are CPSase. L-glutamine contacts are provided by Ser-45, Gly-222, and Gly-224. Residues 174–358 (EVVLVDCGVK…RYVDMLREYR (185 aa)) form the Glutamine amidotransferase type-1 domain. Cys-249 (nucleophile) is an active-site residue. L-glutamine is bound by residues Leu-250, Gln-253, Asn-291, and Phe-294. Catalysis depends on residues His-333 and Glu-335.

It belongs to the CarA family. As to quaternary structure, composed of two chains; the small (or glutamine) chain promotes the hydrolysis of glutamine to ammonia, which is used by the large (or ammonia) chain to synthesize carbamoyl phosphate. Tetramer of heterodimers (alpha,beta)4.

It catalyses the reaction hydrogencarbonate + L-glutamine + 2 ATP + H2O = carbamoyl phosphate + L-glutamate + 2 ADP + phosphate + 2 H(+). The catalysed reaction is L-glutamine + H2O = L-glutamate + NH4(+). Its pathway is amino-acid biosynthesis; L-arginine biosynthesis; carbamoyl phosphate from bicarbonate: step 1/1. It functions in the pathway pyrimidine metabolism; UMP biosynthesis via de novo pathway; (S)-dihydroorotate from bicarbonate: step 1/3. Functionally, small subunit of the glutamine-dependent carbamoyl phosphate synthetase (CPSase). CPSase catalyzes the formation of carbamoyl phosphate from the ammonia moiety of glutamine, carbonate, and phosphate donated by ATP, constituting the first step of 2 biosynthetic pathways, one leading to arginine and/or urea and the other to pyrimidine nucleotides. The small subunit (glutamine amidotransferase) binds and cleaves glutamine to supply the large subunit with the substrate ammonia. The polypeptide is Carbamoyl phosphate synthase small chain (Archaeoglobus fulgidus (strain ATCC 49558 / DSM 4304 / JCM 9628 / NBRC 100126 / VC-16)).